We begin with the raw amino-acid sequence, 720 residues long: Exocyst complex component 7 (720 aa).

Coiled-coil stretches lie at residues 5–34 and 63–83; these read EDAS…SLEK and VHKQ…TLSN. Residue Ser-133 is modified to Phosphoserine. Residues 249-268 form a disordered region; it reads SPAVQTKRKETPTKKAPKRP.

It belongs to the EXO70 family.

The protein resides in the cytoplasm. It is found in the cytosol. Its subcellular location is the cell membrane. The protein localises to the midbody. It localises to the midbody ring. In terms of biological role, component of the exocyst complex involved in the docking of exocytic vesicles with fusion sites on the plasma membrane. It is required for neuron survival and plays an essential role in telencephalon development. The sequence is that of Exocyst complex component 7 (exoc7) from Danio rerio (Zebrafish).